The sequence spans 248 residues: 2,3-bisphosphoglycerate-dependent phosphoglycerate mutase (248 aa).

Substrate-binding positions include arginine 8 to asparagine 15 and arginine 58. Histidine 9 serves as the catalytic Tele-phosphohistidine intermediate. The tract at residues glycine 82–lysine 101 is disordered. Glutamate 124 acts as the Proton donor/acceptor in catalysis. Substrate contacts are provided by residues glutamate 124–tyrosine 127 and lysine 135.

The protein belongs to the phosphoglycerate mutase family. BPG-dependent PGAM subfamily.

The catalysed reaction is (2R)-2-phosphoglycerate = (2R)-3-phosphoglycerate. The protein operates within carbohydrate degradation; glycolysis; pyruvate from D-glyceraldehyde 3-phosphate: step 3/5. In terms of biological role, catalyzes the interconversion of 2-phosphoglycerate and 3-phosphoglycerate. In Methanosarcina acetivorans (strain ATCC 35395 / DSM 2834 / JCM 12185 / C2A), this protein is 2,3-bisphosphoglycerate-dependent phosphoglycerate mutase.